Reading from the N-terminus, the 299-residue chain is Acetylglutamate kinase (299 aa).

Residues 70–71, R92, and N186 each bind substrate; that span reads GG.

This sequence belongs to the acetylglutamate kinase family. ArgB subfamily.

It localises to the cytoplasm. It catalyses the reaction N-acetyl-L-glutamate + ATP = N-acetyl-L-glutamyl 5-phosphate + ADP. The protein operates within amino-acid biosynthesis; L-arginine biosynthesis; N(2)-acetyl-L-ornithine from L-glutamate: step 2/4. Its function is as follows. Catalyzes the ATP-dependent phosphorylation of N-acetyl-L-glutamate. The sequence is that of Acetylglutamate kinase from Thermoanaerobacter sp. (strain X514).